The following is a 380-amino-acid chain: Protein phosphatase methylesterase 1 (380 aa).

The disordered stretch occupies residues 1-38; the sequence is MSALEKSMHLGRLPSRPPLPGSGGSQSGAKMRMGPGRK. Ser15 carries the phosphoserine modification. Residue Arg16 is modified to Asymmetric dimethylarginine; alternate. Position 16 is an omega-N-methylarginine; alternate (Arg16). Position 42 is a phosphoserine (Ser42). Catalysis depends on residues Ser156 and Asp181. A compositionally biased stretch (acidic residues) spans 255-265; it reads IEEEEEDEEGS. Residues 255 to 280 are disordered; that stretch reads IEEEEEDEEGSESVNKRKKEDDMETK. The segment covering 268 to 280 has biased composition (basic and acidic residues); sequence VNKRKKEDDMETK. His349 is a catalytic residue.

Belongs to the AB hydrolase superfamily. Binds PPP2CA and PPP2CB. In terms of processing, phosphorylated by SIK1 following increases in intracellular sodium, leading to dissociation from the protein phosphatase 2A (PP2A) complex and subsequent dephosphorylation of sodium/potassium-transporting ATPase ATP1A1.

The enzyme catalyses [phosphatase 2A protein]-C-terminal L-leucine methyl ester + H2O = [phosphatase 2A protein]-C-terminal L-leucine + methanol + H(+). Its function is as follows. Demethylates proteins that have been reversibly carboxymethylated. Demethylates PPP2CB (in vitro) and PPP2CA. Binding to PPP2CA displaces the manganese ion and inactivates the enzyme. This chain is Protein phosphatase methylesterase 1 (PPME1), found in Bos taurus (Bovine).